Reading from the N-terminus, the 464-residue chain is Arginine biosynthesis bifunctional protein ArgJ, mitochondrial (464 aa).

A mitochondrion-targeting transit peptide spans 1–22 (MAASFKALPQQLTLTRSFARCY). Substrate contacts are provided by Thr193, Lys222, Thr233, Glu320, Asn459, and Thr464. Thr233 serves as the catalytic Nucleophile.

Belongs to the ArgJ family. In terms of assembly, heterodimer of an alpha and a beta chain. The alpha and beta chains are autoproteolytically processed from a single precursor protein within the mitochondrion.

The protein resides in the mitochondrion matrix. It carries out the reaction N(2)-acetyl-L-ornithine + L-glutamate = N-acetyl-L-glutamate + L-ornithine. The catalysed reaction is L-glutamate + acetyl-CoA = N-acetyl-L-glutamate + CoA + H(+). The protein operates within amino-acid biosynthesis; L-arginine biosynthesis; L-ornithine and N-acetyl-L-glutamate from L-glutamate and N(2)-acetyl-L-ornithine (cyclic): step 1/1. It functions in the pathway amino-acid biosynthesis; L-arginine biosynthesis; N(2)-acetyl-L-ornithine from L-glutamate: step 1/4. Catalyzes two activities which are involved in the cyclic version of arginine biosynthesis: the synthesis of acetylglutamate from glutamate and acetyl-CoA, and of ornithine by transacetylation between acetylornithine and glutamate. This chain is Arginine biosynthesis bifunctional protein ArgJ, mitochondrial, found in Verticillium alfalfae (strain VaMs.102 / ATCC MYA-4576 / FGSC 10136) (Verticillium wilt of alfalfa).